A 397-amino-acid chain; its full sequence is MNDVITQLLRGTHEVLRLEELQKRIESGKPLRIKAGFDPTAPDLHLGHTVLLNKLKQFQDLGHETIFLIGDFTGMIGDPTGKNVTRRPLTRDEVIENAKTYEEQIYKVLCPERTLVMFNSSWMNAMTSADLIQLAAKHTVARMLERDDFAKRYAGGQPISIHEFLYPLIQGYDSVALKADVELGGADQKFNLLVGRHLQEIYGQTPQVVMTMPILEGLDGIQKMSKSLGNYIGIADPPDDMFGKIMSISDDLMWRYYDLLSFAPLAEVARWRRECSEGANPRDVKVRLGQEIVERFHGASAARKALENFEARHRDNAVPDDLVEQVIAVPDGGYPIANLVHDLALTASTSEALRLIKQGGIKIDGERLEDPKCRMTAGGTHIIQVGKRKFAKIRLTP.

Residues 39 to 48 (PTAPDLHLGH) carry the 'HIGH' region motif. The 'KMSKS' region motif lies at 223-227 (KMSKS). An ATP-binding site is contributed by lysine 226. The 62-residue stretch at 334–395 (YPIANLVHDL…GKRKFAKIRL (62 aa)) folds into the S4 RNA-binding domain.

Belongs to the class-I aminoacyl-tRNA synthetase family. TyrS type 2 subfamily. Homodimer.

It localises to the cytoplasm. The catalysed reaction is tRNA(Tyr) + L-tyrosine + ATP = L-tyrosyl-tRNA(Tyr) + AMP + diphosphate + H(+). Its function is as follows. Catalyzes the attachment of tyrosine to tRNA(Tyr) in a two-step reaction: tyrosine is first activated by ATP to form Tyr-AMP and then transferred to the acceptor end of tRNA(Tyr). The sequence is that of Tyrosine--tRNA ligase from Methylococcus capsulatus (strain ATCC 33009 / NCIMB 11132 / Bath).